The following is a 173-amino-acid chain: Mesencephalic astrocyte-derived neurotrophic factor homolog (173 aa).

Positions 1 to 22 (MKTWHMVVVIGFLATLAQTSLA) are cleaved as a signal peptide. 4 disulfides stabilise this stretch: Cys28-Cys114, Cys31-Cys103, Cys61-Cys72, and Cys148-Cys151.

This sequence belongs to the ARMET family.

The protein localises to the secreted. Functionally, required during the maturation of the embryonic nervous system for maintenance of neuronal and cuticular connectivity. Essential for maintenance of dopaminergic neurons and dopamine levels. The protein is Mesencephalic astrocyte-derived neurotrophic factor homolog of Drosophila sechellia (Fruit fly).